We begin with the raw amino-acid sequence, 389 residues long: Choline/ethanolaminephosphotransferase 1 (389 aa).

The chain crosses the membrane as a helical span at residues 40–60 (VFPLWMPPNMITLMGFMFLVT). N48 contacts CDP-choline. Residues D95 and D98 each contribute to the Mg(2+) site. R103 contacts CDP-choline. A Mg(2+)-binding site is contributed by D116. H117 (proton acceptor) is an active-site residue. D120 is a Mg(2+) binding site. Transmembrane regions (helical) follow at residues 141-161 (TFWF…EHYF), 176-196 (GLAL…EWWA), 221-241 (VLYM…VTNV), 252-272 (MVLA…VLIW), 280-300 (LIAT…GFLV), 322-344 (SLLY…GVPL), and 350-370 (VLLG…TSVI).

The protein belongs to the CDP-alcohol phosphatidyltransferase class-I family. Mg(2+) is required as a cofactor. Requires Mn(2+) as cofactor.

The protein localises to the membrane. The catalysed reaction is CDP-ethanolamine + a 1,2-diacyl-sn-glycerol = a 1,2-diacyl-sn-glycero-3-phosphoethanolamine + CMP + H(+). It catalyses the reaction CDP-choline + a 1,2-diacyl-sn-glycerol = a 1,2-diacyl-sn-glycero-3-phosphocholine + CMP + H(+). It functions in the pathway phospholipid metabolism; phosphatidylethanolamine biosynthesis; phosphatidylethanolamine from ethanolamine: step 3/3. It participates in phospholipid metabolism; phosphatidylcholine biosynthesis; phosphatidylcholine from phosphocholine: step 2/2. Catalyzes both phosphatidylcholine and phosphatidylethanolamine biosynthesis from CDP-choline and CDP-ethanolamine, respectively. Has a higher cholinephosphotransferase activity than ethanolaminephosphotransferase activity. The chain is Choline/ethanolaminephosphotransferase 1 (AAPT1) from Arabidopsis thaliana (Mouse-ear cress).